Here is a 142-residue protein sequence, read N- to C-terminus: Ribosome-binding factor A (142 aa).

The interval 119 to 142 (EAKQKQHGVETDAEQGETKDEGDK) is disordered.

Belongs to the RbfA family. As to quaternary structure, monomer. Binds 30S ribosomal subunits, but not 50S ribosomal subunits or 70S ribosomes.

The protein resides in the cytoplasm. One of several proteins that assist in the late maturation steps of the functional core of the 30S ribosomal subunit. Associates with free 30S ribosomal subunits (but not with 30S subunits that are part of 70S ribosomes or polysomes). Required for efficient processing of 16S rRNA. May interact with the 5'-terminal helix region of 16S rRNA. The sequence is that of Ribosome-binding factor A from Shewanella halifaxensis (strain HAW-EB4).